The primary structure comprises 305 residues: Major fimbrium anchoring subunit FimB (305 aa).

Positions 1 to 22 (MNDAKKYIVSVLILLVAGMFGG) are cleaved as a signal peptide. A lipid anchor (N-palmitoyl cysteine) is attached at C23. C23 carries S-diacylglycerol cysteine lipidation.

The protein belongs to the bacteroidetes fimbrillin superfamily. FimB/Mfa2 family. FimB is not part of the fimbrium itself, but anchors the fimbrium in the outer membrane. Linear, head-to-tail oligomerization of fimbrial subunits mediates assembly of the fimbrium stalk, while the minor components FimC, FimD and FimE probably form the fimbrium tip. The anchoring subunit FimB limits fimbrium length and is important for solid fimbrium attachment to the outer membrane. In its absence, the major fimbriae become very long and are easily detached from the membrane.

It is found in the cell outer membrane. In terms of biological role, anchoring subunit of the major fimbriae. Regulates fimbrial length. These filamentous pili are attached to the cell surface; they mediate biofilm formation, adhesion onto host cells and onto other bacteria that are part of the oral microbiome. Fimbriae of P.gingivalis are major virulence factors. The chain is Major fimbrium anchoring subunit FimB from Porphyromonas gingivalis (Bacteroides gingivalis).